The chain runs to 306 residues: Homeobox protein HMX3 (306 aa).

The tract at residues 95–181 (HTPRTEVPDK…DKKPCRKKKT (87 aa)) is disordered. 2 stretches are compositionally biased toward basic and acidic residues: residues 117 to 143 (GERD…KSPE) and 153 to 174 (EEGK…PDKK). Residues 178 to 237 (KKKTRTVFSRSQVFQLESTFDMKRYLSSSERAGLAASLHLTETQVKIWFQNRRNKWKRQL) constitute a DNA-binding region (homeobox).

The protein belongs to the HMX homeobox family.

The protein localises to the nucleus. Functionally, transcription factor involved in specification of neuronal cell types and which is required for inner ear and hypothalamus development. Binds to the 5'-CAAGTG-3' core sequence. May act as a stage-specific inhibitor of anf1 in the anterior neural plate during the development. This Xenopus tropicalis (Western clawed frog) protein is Homeobox protein HMX3 (hmx3).